The primary structure comprises 429 residues: Serine hydroxymethyltransferase (429 aa).

Position 120–122 (120–122) interacts with (6S)-5,6,7,8-tetrahydrofolate; it reads GHI. Lys-226 is modified (N6-(pyridoxal phosphate)lysine).

This sequence belongs to the SHMT family. Homodimer. The cofactor is pyridoxal 5'-phosphate.

It is found in the cytoplasm. The catalysed reaction is 5,10-methylenetetrahydromethanopterin + glycine + H2O = 5,6,7,8-tetrahydromethanopterin + L-serine. The enzyme catalyses L-allo-threonine = acetaldehyde + glycine. Its pathway is amino-acid biosynthesis; glycine biosynthesis; glycine from L-serine: step 1/1. In terms of biological role, catalyzes the reversible interconversion of serine and glycine with tetrahydromethanopterin (H4MPT) serving as the one-carbon carrier. The use of tetrahydrofolate (THF or H4PteGlu) as the pteridine substrate is 450-fold less efficient than that of H4MPT. Also exhibits a pteridine-independent aldolase activity toward beta-hydroxyamino acids, producing glycine and aldehydes, via a retro-aldol mechanism. Thus, is able to catalyze the cleavage of L-allo-threonine and L-threo-beta-phenylserine. The polypeptide is Serine hydroxymethyltransferase (Methanocaldococcus jannaschii (strain ATCC 43067 / DSM 2661 / JAL-1 / JCM 10045 / NBRC 100440) (Methanococcus jannaschii)).